A 137-amino-acid chain; its full sequence is Small ribosomal subunit protein uS9c (137 aa).

The protein belongs to the universal ribosomal protein uS9 family.

The protein localises to the plastid. Its subcellular location is the chloroplast. This chain is Small ribosomal subunit protein uS9c (rps9), found in Gracilaria tenuistipitata var. liui (Red alga).